Here is a 246-residue protein sequence, read N- to C-terminus: MPHYRRILLKLSGEALLGDGQYGIAANTLDRIADELAEINAMGVEVAVVIGGGNIFRGAGLAASGMDRVTADHMGMLATVMNALAIQDALERRSVFCRVMSAIKINQVCEDYIRRRAVRHLEKGRVVIFAAGTGNPFFTTDSAASLRAVEVGAELLLKGTKVDGVYSSDPVRDPEAKRYQQLTYDEVLSKRLEVMDATAIVLCRDQAMRIMVFDITSPGTMVAAARGEPVGTVVDPGLPSAQEESS.

An ATP-binding site is contributed by K10 to G13. A UMP-binding site is contributed by G52. ATP is bound by residues G53 and R57. UMP contacts are provided by residues D72 and T133–T140. T160, Y166, and D169 together coordinate ATP.

Belongs to the UMP kinase family. In terms of assembly, homohexamer.

The protein resides in the cytoplasm. The enzyme catalyses UMP + ATP = UDP + ADP. It functions in the pathway pyrimidine metabolism; CTP biosynthesis via de novo pathway; UDP from UMP (UMPK route): step 1/1. With respect to regulation, inhibited by UTP. In terms of biological role, catalyzes the reversible phosphorylation of UMP to UDP. In Halorhodospira halophila (strain DSM 244 / SL1) (Ectothiorhodospira halophila (strain DSM 244 / SL1)), this protein is Uridylate kinase.